Here is a 281-residue protein sequence, read N- to C-terminus: Nucleotide-binding protein PSHAa2554 (281 aa).

G8–S15 is an ATP binding site. Residue D56–N59 coordinates GTP.

Belongs to the RapZ-like family.

In terms of biological role, displays ATPase and GTPase activities. This chain is Nucleotide-binding protein PSHAa2554, found in Pseudoalteromonas translucida (strain TAC 125).